The chain runs to 189 residues: Elongation factor P (189 aa).

K34 bears the N6-(3,6-diaminohexanoyl)-5-hydroxylysine mark.

Belongs to the elongation factor P family. Post-translationally, may be beta-lysylated on the epsilon-amino group of Lys-34 by the combined action of EpmA and EpmB, and then hydroxylated on the C5 position of the same residue by EpmC (if this protein is present). Lysylation is critical for the stimulatory effect of EF-P on peptide-bond formation. The lysylation moiety may extend toward the peptidyltransferase center and stabilize the terminal 3-CCA end of the tRNA. Hydroxylation of the C5 position on Lys-34 may allow additional potential stabilizing hydrogen-bond interactions with the P-tRNA.

The protein localises to the cytoplasm. It participates in protein biosynthesis; polypeptide chain elongation. Involved in peptide bond synthesis. Alleviates ribosome stalling that occurs when 3 or more consecutive Pro residues or the sequence PPG is present in a protein, possibly by augmenting the peptidyl transferase activity of the ribosome. Modification of Lys-34 is required for alleviation. In Halorhodospira halophila (strain DSM 244 / SL1) (Ectothiorhodospira halophila (strain DSM 244 / SL1)), this protein is Elongation factor P.